Here is a 301-residue protein sequence, read N- to C-terminus: Oxygen-dependent coproporphyrinogen-III oxidase (301 aa).

Position 92 (Ser-92) interacts with substrate. Residues His-96 and His-106 each coordinate a divalent metal cation. His-106 acts as the Proton donor in catalysis. Asn-108–Arg-110 contributes to the substrate binding site. Residues His-145 and His-175 each contribute to the a divalent metal cation site. The tract at residues Tyr-240 to Glu-275 is important for dimerization. Gly-258 to Arg-260 is a substrate binding site.

Belongs to the aerobic coproporphyrinogen-III oxidase family. As to quaternary structure, homodimer. The cofactor is a divalent metal cation.

It localises to the cytoplasm. The catalysed reaction is coproporphyrinogen III + O2 + 2 H(+) = protoporphyrinogen IX + 2 CO2 + 2 H2O. Its pathway is porphyrin-containing compound metabolism; protoporphyrin-IX biosynthesis; protoporphyrinogen-IX from coproporphyrinogen-III (O2 route): step 1/1. In terms of biological role, involved in the heme biosynthesis. Catalyzes the aerobic oxidative decarboxylation of propionate groups of rings A and B of coproporphyrinogen-III to yield the vinyl groups in protoporphyrinogen-IX. This is Oxygen-dependent coproporphyrinogen-III oxidase from Cronobacter sakazakii (strain ATCC BAA-894) (Enterobacter sakazakii).